The chain runs to 465 residues: MNVTSLFSFTSPAVKRLLGWKQGDEEEKWAEKAVDALVKKLKKKKGAMEELEKALSCPGQPSNCVTIPRSLDGRLQVSHRKGLPHVIYCRVWRWPDLQSHHELKPLECCEFPFGSKQKEVCINPYHYKRVESPVLPPVLVPRHSEYNPQHSLLAQFRNLGQNEPHMPLNATFPDSFQQPNSHPFPHSPNSSYPNSPGSSSSTYPHSPTSSDPGSPFQMPADTPPPAYLPPEDPMTQDGSQPMDTNMMAPPLPSEINRGDVQAVAYEEPKHWCSIVYYELNNRVGEAFHASSTSVLVDGFTDPSNNKNRFCLGLLSNVNRNSTIENTRRHIGKGVHLYYVGGEVYAECLSDSSIFVQSRNCNYHHGFHPTTVCKIPSGCSLKIFNNQEFAQLLAQSVNHGFETVYELTKMCTIRMSFVKGWGAEYHRQDVTSTPCWIEIHLHGPLQWLDKVLTQMGSPHNPISSVS.

An N-acetylmethionine modification is found at methionine 1. One can recognise an MH1 domain in the interval 12–136 (PAVKRLLGWK…YKRVESPVLP (125 aa)). Cysteine 64, cysteine 109, cysteine 121, and histidine 126 together coordinate Zn(2+). Residues 162–248 (NEPHMPLNAT…SQPMDTNMMA (87 aa)) are disordered. The segment covering 179-210 (PNSHPFPHSPNSSYPNSPGSSSSTYPHSPTSS) has biased composition (low complexity). Positions 221–232 (DTPPPAYLPPED) are enriched in pro residues. One can recognise an MH2 domain in the interval 271-465 (WCSIVYYELN…SPHNPISSVS (195 aa)). Position 322 is a phosphothreonine; by MINK1, TNIK and MAP4K4 (threonine 322). The interval 418–428 (KGWGAEYHRQD) is L3 loop. 2 positions are modified to phosphoserine: serine 463 and serine 465.

It belongs to the dwarfin/SMAD family. Found in a complex with SMAD4 and YY1. Interacts with HGS, NANOG and ZCCHC12. Upon C-terminus phosphorylation: forms trimers with another SMAD1 and the co-SMAD SMAD4. Interacts with PEBP2-alpha subunit, CREB-binding protein (CBP), p300, SMURF1, SMURF2, USP15 and HOXC8. Associates with ZNF423 or ZNF521 in response to BMP2 leading to activate transcription of BMP target genes. Interacts with SKOR1. Interacts (via MH2 domain) with LEMD3. Binding to LEMD3 results in at least a partial reduction of receptor-mediated phosphorylation. Forms a ternary complex with PSMB4 and OAZ1 before PSMB4 is incorporated into the 20S proteasome. Interacts (via MH2 domain) with FAM83G (via MH2 domain); in a SMAD4-independent manner. Interacts with ZC3H3. Interacts with TMEM119. Interacts (via MH1 and MH2 domains) with ZNF8. Interacts with RANBP3L; the interaction increases when SMAD1 is not phosphorylated and mediates SMAD1 nuclear export. Interacts with EGR1; this interaction inhibits SMAD1 dephosphorylation. Interacts with SMAD6. Interacts with YAP1. Interacts with MTMR4; negatively regulates BMP signaling through SMAD1 dephosphorylation and retention in endosomes. Post-translationally, phosphorylation of the C-terminal SVS motif by BMP type 1 receptor kinase activates SMAD1 by promoting dissociation from the receptor and trimerization with SMAD4. Phosphorylation by ERK2 MAP kinase in response to EGF or HGF prevents SMAD1 nuclear accumulation and transcriptional activity in response to BMP. Dephosphorylation, probably by PPM1A, induces its export from the nucleus to the cytoplasm. Dephosphorylation is inhibited by association with EGR1. Phosphorylation by CDK8/9 creates binding sites for YAP1, and subsequent phosphorylation by GSK3 switches off YAP1 binding and adds binding sites for SMURF1. Ubiquitinated by SMAD-specific E3 ubiquitin ligase SMURF1, leading to its degradation. Monoubiquitinated, leading to prevent DNA-binding. Deubiquitination by USP15 alleviates inhibition and promotes activation of TGF-beta target genes. Dephosphorylation, probably by PPM1A, induces its export from the nucleus to the cytoplasm. Phospho-SMAD1 is ubiquitinated by CHIP leading to disruption of the SMAD1-SMAD4 complex. Ubiquitous. Highest expression seen in the heart and skeletal muscle.

Its subcellular location is the cytoplasm. The protein localises to the nucleus. Functionally, transcriptional modulator that plays a role in various cellular processes, including embryonic development, cell differentiation, and tissue homeostasis. Upon BMP ligand binding to their receptors at the cell surface, is phosphorylated by activated type I BMP receptors (BMPRIs) and associates with SMAD4 to form a heteromeric complex which translocates into the nucleus acting as transcription factor. In turn, the hetero-trimeric complex recognizes cis-regulatory elements containing Smad Binding Elements (SBEs) to modulate the outcome of the signaling network. SMAD1/OAZ1/PSMB4 complex mediates the degradation of the CREBBP/EP300 repressor SNIP1. Positively regulates BMP4-induced expression of odontogenic development regulator MSX1 following IPO7-mediated nuclear import. This chain is Mothers against decapentaplegic homolog 1 (SMAD1), found in Homo sapiens (Human).